The following is a 396-amino-acid chain: Probable tRNA sulfurtransferase (396 aa).

The 104-residue stretch at 63-166 (AAAARASARV…GRRAYFFDTI (104 aa)) folds into the THUMP domain. ATP is bound by residues 184–185 (LY), arginine 266, glycine 288, and glutamine 297.

It belongs to the ThiI family.

The protein localises to the cytoplasm. It catalyses the reaction [ThiI sulfur-carrier protein]-S-sulfanyl-L-cysteine + a uridine in tRNA + 2 reduced [2Fe-2S]-[ferredoxin] + ATP + H(+) = [ThiI sulfur-carrier protein]-L-cysteine + a 4-thiouridine in tRNA + 2 oxidized [2Fe-2S]-[ferredoxin] + AMP + diphosphate. It carries out the reaction [ThiS sulfur-carrier protein]-C-terminal Gly-Gly-AMP + S-sulfanyl-L-cysteinyl-[cysteine desulfurase] + AH2 = [ThiS sulfur-carrier protein]-C-terminal-Gly-aminoethanethioate + L-cysteinyl-[cysteine desulfurase] + A + AMP + 2 H(+). The protein operates within cofactor biosynthesis; thiamine diphosphate biosynthesis. Catalyzes the ATP-dependent transfer of a sulfur to tRNA to produce 4-thiouridine in position 8 of tRNAs, which functions as a near-UV photosensor. Also catalyzes the transfer of sulfur to the sulfur carrier protein ThiS, forming ThiS-thiocarboxylate. This is a step in the synthesis of thiazole, in the thiamine biosynthesis pathway. The sulfur is donated as persulfide by IscS. In Aeropyrum pernix (strain ATCC 700893 / DSM 11879 / JCM 9820 / NBRC 100138 / K1), this protein is Probable tRNA sulfurtransferase.